Consider the following 471-residue polypeptide: Putative multidrug resistance protein MdtD (471 aa).

Over 1–11 (MTDLPDSTRWR) the chain is Periplasmic. A helical transmembrane segment spans residues 12–32 (LWIVAFGFFMQSLDTTIVNTA). Residues 33–48 (LPSMAQSLGESPLHMH) are Cytoplasmic-facing. The helical transmembrane segment at 49–69 (MVIVSYVLTVAVMLPASGWLA) threads the bilayer. The Periplasmic portion of the chain corresponds to 70 to 76 (DKVGVRN). A helical transmembrane segment spans residues 77-97 (IFFTAIVLFTLGSLFCALSGT). Residues 98 to 101 (LNEL) are Cytoplasmic-facing. A helical membrane pass occupies residues 102–124 (LLARALQGVGGAMMVPVGRLTVM). Residues 125–137 (KIVPREQYMAAMT) are Periplasmic-facing. The chain crosses the membrane as a helical span at residues 138–158 (FVTLPGQVGPLLGPALGGLLV). Residues 159–164 (EYASWH) are Cytoplasmic-facing. The chain crosses the membrane as a helical span at residues 165–185 (WIFLINIPVGIIGAIATLMLM). Residues 186 to 196 (PNYTMQTRRFD) are Periplasmic-facing. A helical membrane pass occupies residues 197–217 (LSGFLLLAVGMAVLTLALDGS). Over 218–224 (KGTGLSP) the chain is Cytoplasmic. A helical transmembrane segment spans residues 225 to 245 (LAIAGLVAVGVVALVLYLLHA). The Periplasmic portion of the chain corresponds to 246–262 (QNNNRALFSLKLFRTRT). Residues 263–283 (FSLGLAGSFAGRIGSGMLPFM) traverse the membrane as a helical segment. Residues 284–285 (TP) are Cytoplasmic-facing. Residues 286–306 (VFLQIGLGFSPFHAGLMMIPM) form a helical membrane-spanning segment. At 307–341 (VLGSMGMKRIVVQVVNRFGYRRVLVATTLGLSLVT) the chain is on the periplasmic side. A helical transmembrane segment spans residues 342-362 (LLFMTTALLGWYYVLPFVLFL). Residues 363 to 395 (QGMVNSTRFSSMNTLTLKDLPDNLASSGNSLLS) lie on the Cytoplasmic side of the membrane. The helical transmembrane segment at 396-416 (MIMQLSMSIGVTIAGLLLGLF) threads the bilayer. Over 417–430 (GSQHVSVDSGTTQT) the chain is Periplasmic. Residues 431–451 (VFMYTWLSMASIIALPAFIFA) form a helical membrane-spanning segment. The Cytoplasmic portion of the chain corresponds to 452 to 471 (RVPNDTHQNVAISRRKRSAQ).

This sequence belongs to the major facilitator superfamily. TCR/Tet family.

It is found in the cell inner membrane. This is Putative multidrug resistance protein MdtD from Escherichia coli O6:K15:H31 (strain 536 / UPEC).